The following is a 331-amino-acid chain: Pectinesterase (331 aa).

An N-terminal signal peptide occupies residues 1-17 (MVKSILASVLFAATALA). Gln-138 contributes to the substrate binding site. Asp-161 acts as the Proton donor in catalysis. Asp-182 (nucleophile) is an active-site residue. Arg-247 and Trp-249 together coordinate substrate.

It belongs to the pectinesterase family.

The protein localises to the secreted. It carries out the reaction [(1-&gt;4)-alpha-D-galacturonosyl methyl ester](n) + n H2O = [(1-&gt;4)-alpha-D-galacturonosyl](n) + n methanol + n H(+). It functions in the pathway glycan metabolism; pectin degradation; 2-dehydro-3-deoxy-D-gluconate from pectin: step 1/5. Functionally, involved in maceration and soft-rotting of plant tissue. This is Pectinesterase (pme1) from Aspergillus niger.